Here is a 509-residue protein sequence, read N- to C-terminus: Transmembrane protein 180 (509 aa).

Residues 1-10 (MGLRLLACLF) are Extracellular-facing. Residues 11-42 (HLPTAVIYGSLSLFVSILHNVFLLYYVDTFVS) traverse the membrane as a helical segment. The Cytoplasmic segment spans residues 43–54 (VYKIDKLSFWIG). The helical transmembrane segment at 55-73 (ETVFLIWNSLNDPLFGWLS) threads the bilayer. The Extracellular portion of the chain corresponds to 74–98 (DRVFLSTQQPGAEISSPEVVLKRLR). Residues 99-116 (ALSHNGPLFAISFLAFWV) traverse the membrane as a helical segment. The Cytoplasmic segment spans residues 117–124 (AWAHPGLQ). The helical transmembrane segment at 125–149 (FLLCLCMYDSFLTMVDLHHNALLAD) threads the bilayer. Residues 150–153 (LAVS) are Extracellular-facing. Residues 154–177 (AKDRTSLNFYCSFFSAIGSLSVFM) traverse the membrane as a helical segment. Topologically, residues 178 to 189 (SYAVWNKEDFFS) are cytoplasmic. Residues 190–221 (FRIFCIVLAFCSIVGFTLSTQLLRQRFETDGK) form a helical membrane-spanning segment. At 222-259 (AKWDQESTLKELYIEKLSVPQEKRITLVEYLQQLSRHR) the chain is on the extracellular side. Residues 260–287 (NFLWFVCMNLIQVFHCHFNSNFFPLFLE) form a helical membrane-spanning segment. At 288 to 300 (HLLSDKISVSTGS) the chain is on the cytoplasmic side. Residues 301–320 (FLLGISYIAPHLNNLYFLSL) traverse the membrane as a helical segment. The Extracellular segment spans residues 321 to 325 (CRRWG). A helical transmembrane segment spans residues 326–345 (VYAVVRGLFFLKLALSVVML). Residues 346–353 (LAGPDQVY) lie on the Cytoplasmic side of the membrane. Residues 354-388 (LLCIFIASNRVFTEGTCKLLNLVVTDLVDEDLVLN) traverse the membrane as a helical segment. Topologically, residues 389 to 397 (RRKQAASAL) are extracellular. A helical membrane pass occupies residues 398-424 (LFGMVALVTKPGQTFAPLIGTWLLCVY). Residues 425–458 (TGYDIFQRNPLSNVVSAQPKLESDTILEPTLRQG) are Cytoplasmic-facing. Residues 459–477 (CFYLLVFVPITCALLQLLS) traverse the membrane as a helical segment. The Extracellular segment spans residues 478–509 (WTQFSLHGKRLQMVKAQRQGLMQGRAPEIKMI).

The protein resides in the cell membrane. This Gallus gallus (Chicken) protein is Transmembrane protein 180.